The following is a 128-amino-acid chain: Sulfurtransferase TusD (128 aa).

The Cysteine persulfide intermediate role is filled by C78.

This sequence belongs to the DsrE/TusD family. Heterohexamer, formed by a dimer of trimers. The hexameric TusBCD complex contains 2 copies each of TusB, TusC and TusD. The TusBCD complex interacts with TusE.

Its subcellular location is the cytoplasm. In terms of biological role, part of a sulfur-relay system required for 2-thiolation of 5-methylaminomethyl-2-thiouridine (mnm(5)s(2)U) at tRNA wobble positions. Accepts sulfur from TusA and transfers it in turn to TusE. The chain is Sulfurtransferase TusD from Klebsiella pneumoniae (strain 342).